A 491-amino-acid polypeptide reads, in one-letter code: MVYDGAVKDQESSANPASASAALSEASAAASEVTAAAAAGAGAGAAEEGAAVSGRPPRPPHDKRLGVRHPLKHRRFRAGGKVMVEPGDPPSAQEVADEEASEVEQEAAPVEREPPQEEGGDVEVSSAPAEMEVVEGDAMEVSPEPAVAVGESELEGRPGEEEEVSSPVVSQGERKQETAAAAPVPAVEEKKHKDQENKHKEREREKERERVDEVGYMSGGWKSEDGFLSCGYSSFRGKRASMEDFYDIKSSKIDDKQISLFGIFDGHGGSRAAEYLKEHLFENLMKHPEFMTNTKLAISETYKKTDSEFLDSESHTHRDDGSTASTAVLVGNHLYVANVGDSRAVISKAGKAIALSEDHKPNRSDERKRIESAGGVVMWAGTWRVGGVLAMSRAFGNRLLKQFVVADPEIQEQEIDDELEFLILASDGLWDVVPNEDAVSLVKIEEEPEAAARKLTETAFSRGSGDNITCIVVKFQHDKMDGDSSPTSDKS.

Over residues 1 to 11 the composition is skewed to basic and acidic residues; the sequence is MVYDGAVKDQE. A disordered region spans residues 1–211; sequence MVYDGAVKDQ…REREKERERV (211 aa). Residues 12–54 show a composition bias toward low complexity; it reads SSANPASASAALSEASAAASEVTAAAAAGAGAGAAEEGAAVSG. The segment covering 66–78 has biased composition (basic residues); the sequence is GVRHPLKHRRFRA. Over residues 95 to 105 the composition is skewed to acidic residues; that stretch reads VADEEASEVEQ. Positions 187 to 211 are enriched in basic and acidic residues; sequence VEEKKHKDQENKHKEREREKERERV. Positions 229 to 475 constitute a PPM-type phosphatase domain; the sequence is SCGYSSFRGK…DNITCIVVKF (247 aa). Residues aspartate 265, glycine 266, aspartate 427, and aspartate 466 each coordinate Mn(2+).

Belongs to the PP2C family. Requires Mg(2+) as cofactor. Mn(2+) serves as cofactor.

The catalysed reaction is O-phospho-L-seryl-[protein] + H2O = L-seryl-[protein] + phosphate. The enzyme catalyses O-phospho-L-threonyl-[protein] + H2O = L-threonyl-[protein] + phosphate. This chain is Probable protein phosphatase 2C 52, found in Oryza sativa subsp. japonica (Rice).